A 404-amino-acid polypeptide reads, in one-letter code: Formate-dependent phosphoribosylglycinamide formyltransferase (404 aa).

Residues 25 to 26 and Glu-85 each bind N(1)-(5-phospho-beta-D-ribosyl)glycinamide; that span reads EL. ATP contacts are provided by residues Arg-118, Lys-159, 164–169, 199–202, and Glu-207; these read SSGKGQ and EGFI. One can recognise an ATP-grasp domain in the interval 123 to 318; that stretch reads RLAAEELGLP…EFELHARAIL (196 aa). Mg(2+) is bound by residues Glu-277 and Glu-289. Residues Asp-296, Lys-365, and 372–373 contribute to the N(1)-(5-phospho-beta-D-ribosyl)glycinamide site; that span reads RR.

Belongs to the PurK/PurT family. Homodimer.

The catalysed reaction is N(1)-(5-phospho-beta-D-ribosyl)glycinamide + formate + ATP = N(2)-formyl-N(1)-(5-phospho-beta-D-ribosyl)glycinamide + ADP + phosphate + H(+). It participates in purine metabolism; IMP biosynthesis via de novo pathway; N(2)-formyl-N(1)-(5-phospho-D-ribosyl)glycinamide from N(1)-(5-phospho-D-ribosyl)glycinamide (formate route): step 1/1. In terms of biological role, involved in the de novo purine biosynthesis. Catalyzes the transfer of formate to 5-phospho-ribosyl-glycinamide (GAR), producing 5-phospho-ribosyl-N-formylglycinamide (FGAR). Formate is provided by PurU via hydrolysis of 10-formyl-tetrahydrofolate. The protein is Formate-dependent phosphoribosylglycinamide formyltransferase of Burkholderia pseudomallei (strain 668).